A 312-amino-acid chain; its full sequence is D-apiose import binding protein (312 aa).

The N-terminal stretch at 1–26 (MKASKRWVALAAATLTLFTATGTAQA) is a signal peptide. Residues Asn-39, 115-116 (DR), 162-164 (DIN), Arg-168, Asn-218, Asp-243, and Gln-263 contribute to the D-apiofuranose site.

This sequence belongs to the bacterial solute-binding protein 2 family.

It localises to the periplasm. In terms of biological role, part of an ABC transporter complex involved in D-apiose import. Binds D-apiose, D-ribose and D-ribulose. This chain is D-apiose import binding protein, found in Paraburkholderia graminis (strain ATCC 700544 / DSM 17151 / LMG 18924 / NCIMB 13744 / C4D1M).